The following is a 54-amino-acid chain: Large ribosomal subunit protein bL33 (54 aa).

It belongs to the bacterial ribosomal protein bL33 family.

This Caldicellulosiruptor saccharolyticus (strain ATCC 43494 / DSM 8903 / Tp8T 6331) protein is Large ribosomal subunit protein bL33.